The chain runs to 308 residues: Glycine-rich protein GRP33 (308 aa).

The 36-residue stretch at 83–118 folds into the KH domain; that stretch reads DQFPKYNFLGKLLGPGGSTMKQLQDETMTKISILGR. 2 stretches are compositionally biased toward gly residues: residues 203–220 and 273–294; these read GPMG…GGFS and RGAG…GGGK. 2 disordered regions span residues 203 to 222 and 270 to 308; these read GPMG…FSGP and SPGR…AAPY.

In terms of processing, the arginines in the Gly-rich domain might be methylated.

The polypeptide is Glycine-rich protein GRP33 (Artemia salina (Brine shrimp)).